Reading from the N-terminus, the 294-residue chain is MAKPRGRKGGRKPSLTPPKNKRAAQLRASQNAFRKRKLERLEELEKKEAQLTVTNDQIHILKKENELLHFMLRSLLTERNMPSDERNISKACCEEKPPTCNTLDGSVVLSSTYNSLEIQQCYVFFKQLLSVCVGKNCTVPSPLNSFDRSFYPIGCTNLSNDIPGYSFLNDAMSEIHTFGDFNGELDSTFLEFSGTEIKEPNNFITENTNAIETAAASMVIRQGFHPRQYYTVDAFGGDVLLSAMDIWSFMKVHPKVNTFDLEILGTELKKSATCSNFDILISLKHFIKVFSSKL.

Residues Met-1–Arg-11 show a composition bias toward basic residues. The segment at Met-1–Ser-29 is disordered. The segment at Arg-22–Glu-45 is basic motif. The bZIP domain maps to Arg-22–Leu-72. The tract at residues Leu-44–Leu-72 is leucine-zipper. The arsenite site is built by Cys-132, Cys-137, and Cys-274.

The protein belongs to the bZIP family. YAP subfamily. As to quaternary structure, homodimer. In terms of processing, phosphorylation by HOG1 promotes nuclear localization in the presence of arsenic.

The protein resides in the cytoplasm. Its subcellular location is the nucleus. Transcriptional activity is controlled by regulated degradation by the ubiquitin-proteasome pathway in absence of arsenic. Arsenic-exposure results in stabilization and increased transcriptional activity. Functionally, transcription activator required for resistance to arsenic compounds and for a regulated expression of ACR2, ACR3 and YCF1. The polypeptide is Arsenical-resistance protein ARR1 (Saccharomyces cerevisiae (strain ATCC 204508 / S288c) (Baker's yeast)).